The sequence spans 444 residues: Trigger factor (444 aa).

One can recognise a PPIase FKBP-type domain in the interval 165 to 250 (GDFAKFDFEG…LHEIQELKIP (86 aa)).

It belongs to the FKBP-type PPIase family. Tig subfamily.

Its subcellular location is the cytoplasm. The enzyme catalyses [protein]-peptidylproline (omega=180) = [protein]-peptidylproline (omega=0). Its function is as follows. Involved in protein export. Acts as a chaperone by maintaining the newly synthesized protein in an open conformation. Functions as a peptidyl-prolyl cis-trans isomerase. The chain is Trigger factor from Campylobacter jejuni subsp. jejuni serotype O:23/36 (strain 81-176).